The sequence spans 102 residues: Guanyl-specific ribonuclease Pc (102 aa).

2 disulfides stabilise this stretch: Cys2–Cys10 and Cys6–Cys101. Residue His38 is part of the active site. Glu56 acts as the Proton acceptor in catalysis. His90 functions as the Proton donor in the catalytic mechanism.

It belongs to the ribonuclease N1/T1 family.

It catalyses the reaction [RNA] containing guanosine + H2O = an [RNA fragment]-3'-guanosine-3'-phosphate + a 5'-hydroxy-ribonucleotide-3'-[RNA fragment].. In Penicillium chrysogenum (Penicillium notatum), this protein is Guanyl-specific ribonuclease Pc.